The primary structure comprises 478 residues: Cytochrome c-552 (478 aa).

The N-terminal stretch at 1 to 26 (MARKTLRARRFFSLIFPFFFITSVYA) is a signal peptide. Residue His-94 coordinates heme c. Heme is bound by residues Cys-122, Cys-125, and Lys-126. Residues Cys-160, Cys-163, His-164, Cys-209, Cys-212, and His-213 each contribute to the heme c site. 4 residues coordinate Ca(2+): Glu-215, Tyr-216, Lys-261, and Gln-263. Tyr-216 is a substrate binding site. His-264 serves as a coordination point for substrate. Heme c contacts are provided by His-275, Cys-282, Cys-285, His-286, His-301, Cys-314, Cys-317, His-318, and His-393.

Belongs to the cytochrome c-552 family. Ca(2+) serves as cofactor. Heme c is required as a cofactor.

It is found in the periplasm. It carries out the reaction 6 Fe(III)-[cytochrome c] + NH4(+) + 2 H2O = 6 Fe(II)-[cytochrome c] + nitrite + 8 H(+). The protein operates within nitrogen metabolism; nitrate reduction (assimilation). Its function is as follows. Catalyzes the reduction of nitrite to ammonia, consuming six electrons in the process. The polypeptide is Cytochrome c-552 (Salmonella gallinarum (strain 287/91 / NCTC 13346)).